The following is a 274-amino-acid chain: Rhamnulose-1-phosphate aldolase (274 aa).

Residue Glu117 is part of the active site. Zn(2+) contacts are provided by His141, His143, and His212.

Belongs to the aldolase class II family. RhaD subfamily. In terms of assembly, homotetramer. It depends on Zn(2+) as a cofactor.

It localises to the cytoplasm. The catalysed reaction is L-rhamnulose 1-phosphate = (S)-lactaldehyde + dihydroxyacetone phosphate. It functions in the pathway carbohydrate degradation; L-rhamnose degradation; glycerone phosphate from L-rhamnose: step 3/3. In terms of biological role, catalyzes the reversible cleavage of L-rhamnulose-1-phosphate to dihydroxyacetone phosphate (DHAP) and L-lactaldehyde. The polypeptide is Rhamnulose-1-phosphate aldolase (Escherichia coli O45:K1 (strain S88 / ExPEC)).